Here is a 248-residue protein sequence, read N- to C-terminus: Cytochrome c oxidase subunit 2 (248 aa).

At Met1–Asn39 the chain is on the mitochondrial intermembrane side. Residues Val40 to Tyr56 traverse the membrane as a helical segment. Over Asn57–Ala87 the chain is Mitochondrial matrix. A helical transmembrane segment spans residues Val88–Cys104. Residues Asp105 to Gln248 lie on the Mitochondrial intermembrane side of the membrane. Cu cation is bound by residues His183, Cys218, Glu220, Cys222, His226, and Met229. Glu220 provides a ligand contact to Mg(2+).

This sequence belongs to the cytochrome c oxidase subunit 2 family. As to quaternary structure, component of the cytochrome c oxidase (complex IV, CIV), a multisubunit enzyme composed of a catalytic core of 3 subunits and several supernumerary subunits. The complex exists as a monomer or a dimer and forms supercomplexes (SCs) in the inner mitochondrial membrane with ubiquinol-cytochrome c oxidoreductase (cytochrome b-c1 complex, complex III, CIII). The cofactor is Cu cation.

It is found in the mitochondrion inner membrane. The catalysed reaction is 4 Fe(II)-[cytochrome c] + O2 + 8 H(+)(in) = 4 Fe(III)-[cytochrome c] + 2 H2O + 4 H(+)(out). Functionally, component of the cytochrome c oxidase, the last enzyme in the mitochondrial electron transport chain which drives oxidative phosphorylation. The respiratory chain contains 3 multisubunit complexes succinate dehydrogenase (complex II, CII), ubiquinol-cytochrome c oxidoreductase (cytochrome b-c1 complex, complex III, CIII) and cytochrome c oxidase (complex IV, CIV), that cooperate to transfer electrons derived from NADH and succinate to molecular oxygen, creating an electrochemical gradient over the inner membrane that drives transmembrane transport and the ATP synthase. Cytochrome c oxidase is the component of the respiratory chain that catalyzes the reduction of oxygen to water. Electrons originating from reduced cytochrome c in the intermembrane space (IMS) are transferred via the dinuclear copper A center (CU(A)) of subunit 2 and heme A of subunit 1 to the active site in subunit 1, a binuclear center (BNC) formed by heme A3 and copper B (CU(B)). The BNC reduces molecular oxygen to 2 water molecules using 4 electrons from cytochrome c in the IMS and 4 protons from the mitochondrial matrix. The polypeptide is Cytochrome c oxidase subunit 2 (COX2) (Brettanomyces naardenensis (Yeast)).